Here is a 249-residue protein sequence, read N- to C-terminus: MNVADLLASSRHCVVFTGAGISAESGVPTFRGPGGLWERYKPEELATPEAFARDPALVWRWYKWRQEVIYNARPSPGHYAIAELEAMGVVRGVITQNVDGLHQRAGSRLVVELHGSIWRARCVKCGSVYILDKPVEEVPPLCRKCGGLLRPDVVWFGEPLPQEAWRAAVELASVSDVLLVVGTSGVVYPAAYIPRIAKEAGARVVEINVEPSAITPIADVFIQGRAGEVLPRLVEEVKRRLRTRQALTP.

Positions 1 to 240 (MNVADLLASS…PRLVEEVKRR (240 aa)) constitute a Deacetylase sirtuin-type domain. 18 to 37 (GAGISAESGVPTFRGPGGLW) serves as a coordination point for NAD(+). Positions 62 and 65 each coordinate substrate. 96 to 99 (QNVD) contributes to the NAD(+) binding site. Catalysis depends on His114, which acts as the Proton acceptor. 4 residues coordinate Zn(2+): Cys122, Cys125, Cys142, and Cys145. Residues 182-184 (GTS), 208-210 (NVE), and Ala226 each bind NAD(+).

The protein belongs to the sirtuin family. Class III subfamily. Zn(2+) serves as cofactor.

It localises to the cytoplasm. The enzyme catalyses N(6)-acetyl-L-lysyl-[protein] + NAD(+) + H2O = 2''-O-acetyl-ADP-D-ribose + nicotinamide + L-lysyl-[protein]. The catalysed reaction is N(6)-succinyl-L-lysyl-[protein] + NAD(+) + H2O = 2''-O-succinyl-ADP-D-ribose + nicotinamide + L-lysyl-[protein]. Functionally, NAD-dependent lysine deacetylase and desuccinylase that specifically removes acetyl and succinyl groups on target proteins. Modulates the activities of several proteins which are inactive in their acylated form. Deacetylates the N-terminal lysine residue of Alba, the major archaeal chromatin protein and that, in turn, increases Alba's DNA binding affinity, thereby repressing transcription. This chain is NAD-dependent protein deacylase 2, found in Pyrobaculum aerophilum (strain ATCC 51768 / DSM 7523 / JCM 9630 / CIP 104966 / NBRC 100827 / IM2).